A 334-amino-acid chain; its full sequence is DCN1-like protein 3 (334 aa).

A DCUN1 domain is found at 112–301 (VSHQTLSKLF…LFDDFVDYEK (190 aa)). The disordered stretch occupies residues 308–334 (SGIHDDDNNNDDPLQSHVKAEDPGLVS). Residues 325-334 (VKAEDPGLVS) show a composition bias toward basic and acidic residues.

The protein resides in the cell membrane. In terms of biological role, promotes neddylation of cullin components of SCF-type E3 ubiquitin ligase complexes and thus regulates SCF-type complex activity. Function promotes cell proliferation. This chain is DCN1-like protein 3, found in Drosophila melanogaster (Fruit fly).